A 503-amino-acid polypeptide reads, in one-letter code: Rhomboid-type serine protease 2 (503 aa).

The span at 1 to 11 (MAAQSYYNGAY) shows a compositional bias: polar residues. A disordered region spans residues 1 to 66 (MAAQSYYNGA…SLRYSQQSIG (66 aa)). Topologically, residues 1–136 (MAAQSYYNGA…QKKKGFFQKK (136 aa)) are cytoplasmic. The helical transmembrane segment at 137–157 (IAYVTYILTIAQIIVFIVELV) threads the bilayer. Residues 158-253 (KMGQLTGSPI…DKPAPDQWFR (96 aa)) lie on the Extracellular side of the membrane. A helical transmembrane segment spans residues 254–274 (FIIPMFLHSGFVHIGFNLLVQ). Topologically, residues 275-283 (MTMGADMER) are cytoplasmic. Residues 284 to 304 (MIGWWRYGLVYLSSGIWGFVL) form a helical membrane-spanning segment. The Extracellular segment spans residues 305–316 (GGNYAGQGEASC). Residues 317–337 (GCSGALFGILALFVLDLLYGW) form a helical membrane-spanning segment. Ser-319 functions as the Nucleophile in the catalytic mechanism. Topologically, residues 338 to 342 (NDRQN) are cytoplasmic. The helical transmembrane segment at 343 to 363 (PWVELIIMVLGIAVSFVLGLL) threads the bilayer. At 364-365 (PG) the chain is on the extracellular side. A helical membrane pass occupies residues 366 to 386 (LDNFSHLGGFTMGLALGLCVM). Residue His-371 is part of the active site. At 387–449 (RSPNALRERI…FAGRKPLWWA (63 aa)) the chain is on the cytoplasmic side. Residues 450 to 470 (WWLVRLGALVAVLIGFILLIV) traverse the membrane as a helical segment. The Extracellular portion of the chain corresponds to 471-503 (NFYKYPSSNCSWCYRFSCLPVNGWCDQGNLFSR).

The protein belongs to the peptidase S54 family.

The protein resides in the membrane. It carries out the reaction Cleaves type-1 transmembrane domains using a catalytic dyad composed of serine and histidine that are contributed by different transmembrane domains.. Its function is as follows. Probable rhomboid-type serine protease that catalyzes intramembrane proteolysis. The chain is Rhomboid-type serine protease 2 from Emericella nidulans (strain FGSC A4 / ATCC 38163 / CBS 112.46 / NRRL 194 / M139) (Aspergillus nidulans).